Reading from the N-terminus, the 391-residue chain is Nucleosome assembly protein 1-like 1 (391 aa).

The span at 1–10 (MADIDNKEQS) shows a compositional bias: basic and acidic residues. The tract at residues 1 to 32 (MADIDNKEQSELDQDLDDVEEVEEEETGEETK) is disordered. Residue Ala-2 is modified to N-acetylalanine. Ser-10 carries the post-translational modification Phosphoserine. Residues 11-28 (ELDQDLDDVEEVEEEETG) show a composition bias toward acidic residues. A phosphothreonine mark is found at Thr-62 and Thr-64. The residue at position 69 (Ser-69) is a Phosphoserine. Lys-116 bears the N6-acetyllysine mark. Residues 125 to 150 (YEPTEEECEWKPDEEDEISEELKEKA) carry the NAP1L motif motif. The segment covering 132-143 (CEWKPDEEDEIS) has biased composition (acidic residues). A disordered region spans residues 132–163 (CEWKPDEEDEISEELKEKAKVEDEKKDEEKED). Ser-143 carries the phosphoserine modification. The segment covering 144–163 (EELKEKAKVEDEKKDEEKED) has biased composition (basic and acidic residues). A Nuclear localization signal motif is present at residues 273–279 (IKKKQKH). The tract at residues 345 to 391 (EAIEDDDDDYDEEGEEADEEGEEEGDEENDPDYDPKKDQNPAECKQQ) is disordered. Acidic residues predominate over residues 346 to 376 (AIEDDDDDYDEEGEEADEEGEEEGDEENDPD). 2 positions are modified to 5-glutamyl polyglycine: Glu-359 and Glu-360. Positions 377–391 (YDPKKDQNPAECKQQ) are enriched in basic and acidic residues. The residue at position 388 (Cys-388) is a Cysteine methyl ester. A lipid anchor (S-farnesyl cysteine) is attached at Cys-388. Positions 389-391 (KQQ) are cleaved as a propeptide — removed in mature form.

It belongs to the nucleosome assembly protein (NAP) family. Homodimer. The dimer binds strongly and sequentially to single and double H2A-H2B heterodimers. Interacts with ERCC6; this interaction increases ERCC6 processivity. Interacts with RAD54. Interacts with SETD1A. Post-translationally, polyglycylated by TTLL10 on glutamate residues, resulting in polyglycine chains on the gamma-carboxyl group. Both polyglutamylation and polyglycylation modifications can coexist on the same protein on adjacent residues, and lowering polyglycylation levels increases polyglutamylation, and reciprocally. In terms of processing, polyglutamylated by TTLL4 on glutamate residues, resulting in polyglutamate chains on the gamma-carboxyl group. Both polyglutamylation and polyglycylation modifications can coexist on the same protein on adjacent residues, and lowering polyglycylation levels increases polyglutamylation, and reciprocally.

The protein localises to the nucleus. It is found in the melanosome. The protein resides in the cytoplasm. Its function is as follows. Histone chaperone that plays a role in the nuclear import of H2A-H2B and nucleosome assembly. Also participates in several important DNA repair mechanisms: greatly enhances ERCC6-mediated chromatin remodeling which is essential for transcription-coupled nucleotide excision DNA repair. Also stimulates homologous recombination (HR) by RAD51 and RAD54 which is essential in mitotic DNA double strand break (DSB) repair. Plays a key role in the regulation of embryonic neurogenesis. Promotes the proliferation of neural progenitors and inhibits neuronal differentiation during cortical development. Regulates neurogenesis via the modulation of RASSF10; regulates RASSF10 expression by promoting SETD1A-mediated H3K4 methylation at the RASSF10 promoter. The protein is Nucleosome assembly protein 1-like 1 (NAP1L1) of Bos taurus (Bovine).